Here is a 291-residue protein sequence, read N- to C-terminus: Nitrogenase iron protein 1 (291 aa).

Position 10 to 17 (10 to 17 (GKGGIGKS)) interacts with ATP. Cysteine 98 is a binding site for [4Fe-4S] cluster. ADP-ribosylarginine; by dinitrogenase reductase ADP-ribosyltransferase is present on arginine 101. A [4Fe-4S] cluster-binding site is contributed by cysteine 133.

The protein belongs to the NifH/BchL/ChlL family. As to quaternary structure, homodimer. [4Fe-4S] cluster serves as cofactor. The reversible ADP-ribosylation of Arg-101 inactivates the nitrogenase reductase and regulates nitrogenase activity.

The catalysed reaction is N2 + 8 reduced [2Fe-2S]-[ferredoxin] + 16 ATP + 16 H2O = H2 + 8 oxidized [2Fe-2S]-[ferredoxin] + 2 NH4(+) + 16 ADP + 16 phosphate + 6 H(+). Its function is as follows. The key enzymatic reactions in nitrogen fixation are catalyzed by the nitrogenase complex, which has 2 components: the iron protein (component 2) and a component 1 which is either a molybdenum-iron protein, a vanadium-iron, or an iron-iron protein. In Azotobacter chroococcum mcd 1, this protein is Nitrogenase iron protein 1 (nifH1).